The chain runs to 314 residues: PDZ domain-containing protein GIPC2 (314 aa).

Residues 1–12 are compositionally biased toward basic residues; the sequence is MPLGLRGKKKAA. A disordered region spans residues 1–36; it reads MPLGLRGKKKAAKSKETARLVEGERSGGSQGVPGPP. Basic and acidic residues predominate over residues 13 to 25; the sequence is KSKETARLVEGER. The 81-residue stretch at 117-197 folds into the PDZ domain; that stretch reads EVNVYKSEDS…EELFTLQLIE (81 aa).

Belongs to the GIPC family. As to quaternary structure, probably interacts with SEMA5A.

It is found in the cytoplasm. This Rattus norvegicus (Rat) protein is PDZ domain-containing protein GIPC2 (Gipc2).